Here is a 277-residue protein sequence, read N- to C-terminus: MALKHFNPITPGQRQLVIVDRSELYKGKPVKSLTEGLSKKGGRNNTGRITVRFQGGGHKRSYRFIDFKRRKLDVVGTVERLEYDPNRTAFIALIRYTDGELAYILAPQRLAVGDQVVAGNSVDVKPGNAMPLSSMPVGTIIHNVELKPGKGGQIARSAGTYAQLVGRDQGMAILRLNSGEQRLVSGACFASVGAVSNPDHGNINDGKAGRSVWRGKRPHVRGVAMNPVDHPHGGGEGRTSGGRHPVTPWGKPTKGKKTRSNKATDKFIMRSRHQRKK.

The tract at residues 222–277 is disordered; that stretch reads GVAMNPVDHPHGGGEGRTSGGRHPVTPWGKPTKGKKTRSNKATDKFIMRSRHQRKK.

This sequence belongs to the universal ribosomal protein uL2 family. As to quaternary structure, part of the 50S ribosomal subunit. Forms a bridge to the 30S subunit in the 70S ribosome.

Its function is as follows. One of the primary rRNA binding proteins. Required for association of the 30S and 50S subunits to form the 70S ribosome, for tRNA binding and peptide bond formation. It has been suggested to have peptidyltransferase activity; this is somewhat controversial. Makes several contacts with the 16S rRNA in the 70S ribosome. The sequence is that of Large ribosomal subunit protein uL2 from Brucella abortus (strain S19).